The sequence spans 790 residues: LPS-assembly protein LptD (790 aa).

The first 20 residues, 1–20 (MRMLRWLILSAFSVAGAVQA), serve as a signal peptide directing secretion.

Belongs to the LptD family. In terms of assembly, component of the lipopolysaccharide transport and assembly complex. Interacts with LptE and LptA.

It localises to the cell outer membrane. Its function is as follows. Together with LptE, is involved in the assembly of lipopolysaccharide (LPS) at the surface of the outer membrane. The polypeptide is LPS-assembly protein LptD (Bordetella pertussis (strain Tohama I / ATCC BAA-589 / NCTC 13251)).